We begin with the raw amino-acid sequence, 276 residues long: Diaminopimelate epimerase (276 aa).

Substrate-binding residues include asparagine 13, glutamine 46, and asparagine 66. Cysteine 75 functions as the Proton donor in the catalytic mechanism. Residues 76 to 77, asparagine 159, asparagine 192, and 210 to 211 each bind substrate; these read GN and ER. Catalysis depends on cysteine 219, which acts as the Proton acceptor. 220–221 is a substrate binding site; sequence GT.

The protein belongs to the diaminopimelate epimerase family. In terms of assembly, homodimer.

It is found in the cytoplasm. The enzyme catalyses (2S,6S)-2,6-diaminopimelate = meso-2,6-diaminopimelate. It functions in the pathway amino-acid biosynthesis; L-lysine biosynthesis via DAP pathway; DL-2,6-diaminopimelate from LL-2,6-diaminopimelate: step 1/1. Catalyzes the stereoinversion of LL-2,6-diaminopimelate (L,L-DAP) to meso-diaminopimelate (meso-DAP), a precursor of L-lysine and an essential component of the bacterial peptidoglycan. The chain is Diaminopimelate epimerase from Pseudomonas fluorescens (strain Pf0-1).